Consider the following 114-residue polypeptide: Large ribosomal subunit protein bL19 (114 aa).

This sequence belongs to the bacterial ribosomal protein bL19 family.

Functionally, this protein is located at the 30S-50S ribosomal subunit interface and may play a role in the structure and function of the aminoacyl-tRNA binding site. The protein is Large ribosomal subunit protein bL19 of Lysinibacillus sphaericus (strain C3-41).